We begin with the raw amino-acid sequence, 190 residues long: Dynactin subunit 6 (190 aa).

T186 is modified (phosphothreonine; by CDK1).

Belongs to the dynactin subunits 5/6 family. Dynactin subunit 6 subfamily. As to quaternary structure, subunit of dynactin, a multiprotein complex part of a tripartite complex with dynein and a adapter, such as BICDL1, BICD2 or HOOK3. The dynactin complex is built around ACTR1A/ACTB filament and consists of an actin-related filament composed of a shoulder domain, a pointed end and a barbed end. Its length is defined by its flexible shoulder domain. The soulder is composed of 2 DCTN1 subunits, 4 DCTN2 and 2 DCTN3. The 4 DCNT2 (via N-terminus) bind the ACTR1A filament and act as molecular rulers to determine the length. The pointed end is important for binding dynein-dynactin cargo adapters. Consists of 4 subunits: ACTR10, DCNT4, DCTN5 and DCTN6. Within the complex DCTN6 forms a heterodimer with DCTN5. The barbed end is composed of a CAPZA1:CAPZB heterodimers, which binds ACTR1A/ACTB filament and dynactin and stabilizes dynactin. Interacts with PLK1. Interacts with N4BP2L1. Post-translationally, phosphorylation at Thr-186 by CDK1 during mitotic prometaphase creates a binding site for PLK1 that facilitates its recruitment to kinetochores.

It localises to the cytoplasm. Its subcellular location is the cytoskeleton. The protein resides in the chromosome. The protein localises to the centromere. It is found in the kinetochore. In terms of biological role, part of the dynactin complex that activates the molecular motor dynein for ultra-processive transport along microtubules. The sequence is that of Dynactin subunit 6 (DCTN6) from Bos taurus (Bovine).